The sequence spans 331 residues: DNA fragmentation factor subunit alpha (331 aa).

The residue at position 1 (Met1) is an N-acetylmethionine. One can recognise a CIDE-N domain in the interval 17–96 (TLKPCLLRRN…ALASNEKWAY (80 aa)). Phosphothreonine is present on Thr243. The disordered stretch occupies residues 305–331 (SLRSISASKASPPGDLQNPKRARQDPT). Ser315 carries the post-translational modification Phosphoserine.

In terms of assembly, heterodimer of DFFA and DFFB. Caspase-3 cleaves DFF45 at 2 sites to generate an active factor.

The protein resides in the cytoplasm. Functionally, inhibitor of the caspase-activated DNase (DFF40). The protein is DNA fragmentation factor subunit alpha (DFFA) of Homo sapiens (Human).